The following is a 247-amino-acid chain: Caffeoyl-CoA O-methyltransferase (247 aa).

Substrate is bound at residue K21. Residues T63, E85, 87-88 (GV), S93, D111, and A140 contribute to the S-adenosyl-L-methionine site. D163 is a binding site for substrate. D163 is an a divalent metal cation binding site. S-adenosyl-L-methionine is bound at residue D165. D189 and N190 together coordinate a divalent metal cation. Residue N194 participates in substrate binding.

This sequence belongs to the class I-like SAM-binding methyltransferase superfamily. Cation-dependent O-methyltransferase family. CCoAMT subfamily. Homodimer. Ca(2+) is required as a cofactor. Requires Mg(2+) as cofactor. Zn(2+) serves as cofactor.

It carries out the reaction (E)-caffeoyl-CoA + S-adenosyl-L-methionine = (E)-feruloyl-CoA + S-adenosyl-L-homocysteine + H(+). It participates in aromatic compound metabolism; phenylpropanoid biosynthesis. Methylates caffeoyl-CoA to feruloyl-CoA and 5-hydroxyferuloyl-CoA to sinapoyl-CoA. Plays a role in the synthesis of feruloylated polysaccharides. Involved in the reinforcement of the plant cell wall. Also involved in the responding to wounding or pathogen challenge by the increased formation of cell wall-bound ferulic acid polymers. This is Caffeoyl-CoA O-methyltransferase (CCOMT) from Medicago sativa (Alfalfa).